A 263-amino-acid polypeptide reads, in one-letter code: Thymidylate kinase (263 aa).

The N-terminal 51 residues, 1–51, are a transit peptide targeting the mitochondrion; it reads MKRICSVSSVQLFSRSFRALASPRSLNYPLQCIKRSSVRMESSNFSSGVRT. 66–74 lines the ATP pocket; it reads GLDRSGKST.

This sequence belongs to the thymidylate kinase family. Expressed in root, rosette leaves, flower buds, flowers and siliques.

It is found in the mitochondrion. The protein resides in the cytoplasm. It localises to the nucleus. The protein localises to the nucleoplasm. It catalyses the reaction dTMP + ATP = dTDP + ADP. The protein operates within pyrimidine metabolism; dTTP biosynthesis. Catalyzes the conversion of dTMP to dTDP. Involved in the regulation of DNA replication. Is essential to promote the first division of the zygote. The sequence is that of Thymidylate kinase from Arabidopsis thaliana (Mouse-ear cress).